Consider the following 253-residue polypeptide: Lys-63-specific deubiquitinase BRCC36 (253 aa).

Residues 9–145 form the MPN domain; the sequence is VELQTDVYMV…KEHEIFLNCF (137 aa). Zn(2+)-binding residues include H94, H96, and D107. Positions 94–107 match the JAMM motif motif; it reads HSHPHITVCPSHVD. Residues 227 to 249 are a coiled coil; sequence EKRIALNKLRATHLQRQLQELQK.

It belongs to the peptidase M67A family. BRCC36 subfamily. Component of the BRISC complex, at least composed of ABRAXAS2, BRCC3/BRCC36, BABAM2 and BABAM1/NBA1. Within the complex, interacts directly with ABRAXAS2. The heterodimer with ABRAXAS2 assembles into a heterotetramer. The BRISC complex binds polyubiquitin. The cofactor is Zn(2+).

It is found in the cytoplasm. The protein localises to the nucleus. Its subcellular location is the cytoskeleton. The protein resides in the spindle pole. Its function is as follows. Metalloprotease that specifically cleaves 'Lys-63'-linked polyubiquitin chains, leaving the last ubiquitin chain attached to its substrates. Catalytic subunit of the BRISC complex; does not have activity by itself, but needs to be associated into a heterotetramer with ABRAXAS2 for minimal in vitro activity. Plays a role in regulating the onset of apoptosis via its role in modulating 'Lys-63'-linked ubiquitination of target proteins. Required for normal mitotic spindle assembly and microtubule attachment to kinetochores via its role in deubiquitinating spindle assembly factors. The protein is Lys-63-specific deubiquitinase BRCC36 of Camponotus floridanus (Florida carpenter ant).